The sequence spans 54 residues: uncharacterized protein (54 aa).

Residues 6–26 (ILIYLLIFVAGIVIGKIRINV) form a helical membrane-spanning segment.

It localises to the host membrane. This is an uncharacterized protein from Acidianus convivator (ABV).